The primary structure comprises 1451 residues: Dual 3',5'-cyclic-AMP and -GMP phosphodiesterase 11 (1451 aa).

Disordered regions lie at residues 1–54 (MGQA…PQIQ), 75–100 (ATTP…GGYG), 125–169 (LPAH…QVQQ), 235–262 (GNDV…GATT), and 327–374 (QHHH…GSGG). A compositionally biased stretch (basic residues) spans 11 to 21 (RGCRYKNKNKS). Residues 24-45 (QQQQQQQQQQQQQQQHQQQQQQ) show a composition bias toward low complexity. Over residues 77-91 (TPLQFQPTGRMNTEQ) the composition is skewed to polar residues. 2 stretches are compositionally biased toward low complexity: residues 135–147 (SGAA…NGSS) and 160–169 (QQQQQYQVQQ). Polar residues predominate over residues 235 to 248 (GNDVVSSTSPTHAN). Positions 327 to 340 (QHHHNHAHLHHSQH) are enriched in basic residues. Positions 341 to 355 (SHYQAGGAVGSSSLG) are enriched in low complexity. The segment covering 356–374 (STGGASGAGGAPSLGGSGG) has biased composition (gly residues). GAF domains lie at 419-572 (EVRT…GIGL) and 604-754 (TIEH…GMGI). Residues 783–1107 (ATMDEAHRLR…GHWIDLADVV (325 aa)) form the PDEase domain. Catalysis depends on His-860, which acts as the Proton donor. A divalent metal cation contacts are provided by His-864, His-900, Asp-901, and Asp-1011. 4 disordered regions span residues 1109–1171 (TKTS…SNTN), 1200–1248 (DEQA…TPVS), 1268–1305 (QTSN…QELD), and 1325–1364 (INNH…IGSA). 2 stretches are compositionally biased toward low complexity: residues 1142–1171 (ASEA…SNTN) and 1218–1234 (CRSN…SCLS). Residues 1268-1277 (QTSNQAQTQK) show a composition bias toward polar residues. Positions 1328 to 1355 (HSHHHNHSHSHNHNHHHHHHHHSHHNHS) are enriched in basic residues.

Belongs to the cyclic nucleotide phosphodiesterase family. A divalent metal cation is required as a cofactor. As to expression, in adults, it is enriched in Malpighian tubules.

The catalysed reaction is 3',5'-cyclic GMP + H2O = GMP + H(+). The enzyme catalyses 3',5'-cyclic AMP + H2O = AMP + H(+). In terms of biological role, plays a role in signal transduction by regulating the intracellular concentration of cyclic nucleotides cAMP and cGMP. Dual-specificity phosphodiesterase that catalyzes the hydrolysis of both cAMP and cGMP to 5'-AMP and 5'-GMP, respectively. The protein is Dual 3',5'-cyclic-AMP and -GMP phosphodiesterase 11 (Pde11) of Drosophila melanogaster (Fruit fly).